The primary structure comprises 203 residues: Translation initiation factor IF-3 (203 aa).

The segment at 168–203 is disordered; that stretch reads QLSPKKKESATKKPATPKPATPAAVKAEKPAGDNEE. The span at 193–203 shows a compositional bias: basic and acidic residues; the sequence is KAEKPAGDNEE.

This sequence belongs to the IF-3 family. In terms of assembly, monomer.

It localises to the cytoplasm. IF-3 binds to the 30S ribosomal subunit and shifts the equilibrium between 70S ribosomes and their 50S and 30S subunits in favor of the free subunits, thus enhancing the availability of 30S subunits on which protein synthesis initiation begins. The sequence is that of Translation initiation factor IF-3 from Bacteroides fragilis (strain ATCC 25285 / DSM 2151 / CCUG 4856 / JCM 11019 / LMG 10263 / NCTC 9343 / Onslow / VPI 2553 / EN-2).